The primary structure comprises 288 residues: Very-long-chain (3R)-3-hydroxyacyl-CoA dehydratase 1 (288 aa).

Positions 1 to 59 are disordered; sequence MGRLTEAAAAGGGASAARSAGPPPAPLPLSSTSPGCAAAMASSEEDGTNGGASEASDER. Topologically, residues 1–75 are cytoplasmic; the sequence is MGRLTEAAAA…RRLGLLATIW (75 aa). Residues 76 to 95 traverse the membrane as a helical segment; it reads LTFYNIAMTAGWLVLAIAMV. Topologically, residues 96-114 are lumenal; sequence RFYMEKGTHKGLYKSIQKT. Residues 115–131 form a helical membrane-spanning segment; sequence LKFFQTFALLEIVHCLI. Residues 132 to 141 are Cytoplasmic-facing; it reads GIVPTSVLVA. Residues 142-159 traverse the membrane as a helical segment; the sequence is GVQVSSRIFMVWLVTHSI. The Lumenal portion of the chain corresponds to 160–165; sequence KPIQNE. Residues 166–180 form a helical membrane-spanning segment; that stretch reads ESVVLFLVAWTVTEI. Over 181-203 the chain is Cytoplasmic; sequence TRYSFYTFSLLDHLPYFIKWARY. A helical membrane pass occupies residues 204-221; the sequence is NFFIILYPVGVAGELLTI. Active-site residues include Y210 and E217. Topologically, residues 222-251 are lumenal; that stretch reads YAALPYVKKTGMFSIRLPNKYNVSFDYYYF. N243 carries N-linked (GlcNAc...) asparagine glycosylation. Residues 252–269 form a helical membrane-spanning segment; that stretch reads LLITMASYIPLFPQLYFH. Topologically, residues 270-288 are cytoplasmic; that stretch reads MLRQRRKVLHGEVIVEKDD.

It belongs to the very long-chain fatty acids dehydratase HACD family. In terms of assembly, may interact with enzymes of the ELO family (including ELOVL1); with those enzymes that mediate condensation, the first of the four steps of the reaction cycle responsible for fatty acids elongation, may be part of a larger fatty acids elongase complex. Interacts with TECR. N-glycosylated. In terms of tissue distribution, expressed in heart.

It is found in the endoplasmic reticulum membrane. The catalysed reaction is a very-long-chain (3R)-3-hydroxyacyl-CoA = a very-long-chain (2E)-enoyl-CoA + H2O. The enzyme catalyses (3R)-hydroxyhexadecanoyl-CoA = (2E)-hexadecenoyl-CoA + H2O. It carries out the reaction (3R)-hydroxyoctadecanoyl-CoA = (2E)-octadecenoyl-CoA + H2O. It catalyses the reaction (3R)-hydroxyeicosanoyl-CoA = (2E)-eicosenoyl-CoA + H2O. The catalysed reaction is (3R)-hydroxydocosanoyl-CoA = (2E)-docosenoyl-CoA + H2O. The enzyme catalyses (3R)-hydroxytetracosanoyl-CoA = (2E)-tetracosenoyl-CoA + H2O. It carries out the reaction (3R)-hydroxyhexacosanoyl-CoA = (2E)-hexacosenoyl-CoA + H2O. The protein operates within lipid metabolism; fatty acid biosynthesis. Its function is as follows. Catalyzes the third of the four reactions of the long-chain fatty acids elongation cycle. This endoplasmic reticulum-bound enzymatic process, allows the addition of two carbons to the chain of long- and very long-chain fatty acids/VLCFAs per cycle. This enzyme catalyzes the dehydration of the 3-hydroxyacyl-CoA intermediate into trans-2,3-enoyl-CoA, within each cycle of fatty acid elongation. Thereby, it participates in the production of VLCFAs of different chain lengths that are involved in multiple biological processes as precursors of membrane lipids and lipid mediators. This is Very-long-chain (3R)-3-hydroxyacyl-CoA dehydratase 1 (HACD1) from Ovis aries (Sheep).